The following is a 102-amino-acid chain: Small ribosomal subunit protein bS6 (102 aa).

It belongs to the bacterial ribosomal protein bS6 family.

Its function is as follows. Binds together with bS18 to 16S ribosomal RNA. This chain is Small ribosomal subunit protein bS6, found in Solidesulfovibrio magneticus (strain ATCC 700980 / DSM 13731 / RS-1) (Desulfovibrio magneticus).